The following is a 421-amino-acid chain: Subtilisin-like protease 2 (421 aa).

A signal peptide spans 1–16 (MQLLNFGLLLLPFVAG). Residues 17–122 (DLAPQPEPLL…VHPDQHVYLA (106 aa)) constitute a propeptide that is removed on maturation. An Inhibitor I9 domain is found at 36-122 (QYIVTLKEGL…VHPDQHVYLA (87 aa)). A Peptidase S8 domain is found at 131–421 (RWGLGYMSSK…ERKFTLPKYF (291 aa)). Active-site charge relay system residues include aspartate 169 and histidine 201. 3 N-linked (GlcNAc...) asparagine glycosylation sites follow: asparagine 248, asparagine 261, and asparagine 348. Residue serine 357 is the Charge relay system of the active site. N-linked (GlcNAc...) asparagine glycosylation occurs at asparagine 388.

Belongs to the peptidase S8 family.

It is found in the secreted. Functionally, secreted subtilisin-like serine protease with keratinolytic activity that contributes to pathogenicity. The sequence is that of Subtilisin-like protease 2 (SUB2) from Trichophyton tonsurans (Scalp ringworm fungus).